The following is a 160-amino-acid chain: SsrA-binding protein (160 aa).

The tract at residues 132–160 is disordered; sequence KEFDKRDTMRERDSNRELQRAVRNKGKEE.

This sequence belongs to the SmpB family.

Its subcellular location is the cytoplasm. In terms of biological role, required for rescue of stalled ribosomes mediated by trans-translation. Binds to transfer-messenger RNA (tmRNA), required for stable association of tmRNA with ribosomes. tmRNA and SmpB together mimic tRNA shape, replacing the anticodon stem-loop with SmpB. tmRNA is encoded by the ssrA gene; the 2 termini fold to resemble tRNA(Ala) and it encodes a 'tag peptide', a short internal open reading frame. During trans-translation Ala-aminoacylated tmRNA acts like a tRNA, entering the A-site of stalled ribosomes, displacing the stalled mRNA. The ribosome then switches to translate the ORF on the tmRNA; the nascent peptide is terminated with the 'tag peptide' encoded by the tmRNA and targeted for degradation. The ribosome is freed to recommence translation, which seems to be the essential function of trans-translation. This is SsrA-binding protein from Pseudomonas putida (strain ATCC 47054 / DSM 6125 / CFBP 8728 / NCIMB 11950 / KT2440).